Reading from the N-terminus, the 458-residue chain is ATP synthase subunit beta (458 aa).

ATP is bound at residue 148-155; sequence GGAGVGKT.

The protein belongs to the ATPase alpha/beta chains family. In terms of assembly, F-type ATPases have 2 components, CF(1) - the catalytic core - and CF(0) - the membrane proton channel. CF(1) has five subunits: alpha(3), beta(3), gamma(1), delta(1), epsilon(1). CF(0) has three main subunits: a(1), b(2) and c(9-12). The alpha and beta chains form an alternating ring which encloses part of the gamma chain. CF(1) is attached to CF(0) by a central stalk formed by the gamma and epsilon chains, while a peripheral stalk is formed by the delta and b chains.

The protein resides in the cell inner membrane. The enzyme catalyses ATP + H2O + 4 H(+)(in) = ADP + phosphate + 5 H(+)(out). In terms of biological role, produces ATP from ADP in the presence of a proton gradient across the membrane. The catalytic sites are hosted primarily by the beta subunits. The polypeptide is ATP synthase subunit beta (Pseudomonas fluorescens (strain ATCC BAA-477 / NRRL B-23932 / Pf-5)).